The following is a 230-amino-acid chain: Ribosomal RNA small subunit methyltransferase G (230 aa).

S-adenosyl-L-methionine-binding positions include G80, F85, 131 to 132 (VE), and R145.

This sequence belongs to the methyltransferase superfamily. RNA methyltransferase RsmG family.

It localises to the cytoplasm. It catalyses the reaction guanosine(527) in 16S rRNA + S-adenosyl-L-methionine = N(7)-methylguanosine(527) in 16S rRNA + S-adenosyl-L-homocysteine. Specifically methylates the N7 position of guanine in position 527 of 16S rRNA. This Novosphingobium aromaticivorans (strain ATCC 700278 / DSM 12444 / CCUG 56034 / CIP 105152 / NBRC 16084 / F199) protein is Ribosomal RNA small subunit methyltransferase G.